A 77-amino-acid polypeptide reads, in one-letter code: Protein NS4 (77 aa).

The protein resides in the host cytoplasm. The protein localises to the host nucleus. It is found in the host nucleolus. In terms of biological role, may function as a nucleic acid binding protein that modulates transcription of genes participating in the IFN response. The polypeptide is Protein NS4 (Segment-9) (Antilocapra americana (Pronghorn)).